The chain runs to 172 residues: Translation initiation factor IF-3 (172 aa).

The protein belongs to the IF-3 family. Monomer.

Its subcellular location is the cytoplasm. IF-3 binds to the 30S ribosomal subunit and shifts the equilibrium between 70S ribosomes and their 50S and 30S subunits in favor of the free subunits, thus enhancing the availability of 30S subunits on which protein synthesis initiation begins. This is Translation initiation factor IF-3 from Lactobacillus johnsonii (strain CNCM I-12250 / La1 / NCC 533).